A 131-amino-acid polypeptide reads, in one-letter code: Probable lactoylglutathione lyase (131 aa).

In terms of domain architecture, VOC spans F2–T126. A Ni(2+)-binding site is contributed by H5. R9 provides a ligand contact to substrate. Position 56 (E56) interacts with Ni(2+). Substrate-binding residues include N60 and H74. Residues H74 and E122 each coordinate Ni(2+). E122 (proton donor/acceptor) is an active-site residue.

The protein belongs to the glyoxalase I family. Requires Ni(2+) as cofactor.

The catalysed reaction is (R)-S-lactoylglutathione = methylglyoxal + glutathione. The protein operates within secondary metabolite metabolism; methylglyoxal degradation; (R)-lactate from methylglyoxal: step 1/2. Catalyzes the conversion of hemimercaptal, formed from methylglyoxal and glutathione, to S-lactoylglutathione. This chain is Probable lactoylglutathione lyase (gloA), found in Synechocystis sp. (strain ATCC 27184 / PCC 6803 / Kazusa).